The chain runs to 117 residues: Large ribosomal subunit protein bL19 (117 aa).

Belongs to the bacterial ribosomal protein bL19 family.

Its function is as follows. This protein is located at the 30S-50S ribosomal subunit interface and may play a role in the structure and function of the aminoacyl-tRNA binding site. The protein is Large ribosomal subunit protein bL19 of Shewanella sediminis (strain HAW-EB3).